We begin with the raw amino-acid sequence, 470 residues long: 1-aminocyclopropane-1-carboxylate synthase 9 (470 aa).

Positions 47 and 85 each coordinate substrate. Lys-272 is subject to N6-(pyridoxal phosphate)lysine.

This sequence belongs to the class-I pyridoxal-phosphate-dependent aminotransferase family. As to quaternary structure, homodimer and heterodimer. In vivo, the relevance of heterodimerization with other ACS enzymes is however unsure. Interacts (via its C-terminal region) with FEI1, FEI2, ETO1 and EOL1. Pyridoxal 5'-phosphate is required as a cofactor. May be processed at its C-terminus. In terms of tissue distribution, expressed in roots and siliques.

It catalyses the reaction S-adenosyl-L-methionine = 1-aminocyclopropane-1-carboxylate + S-methyl-5'-thioadenosine + H(+). It functions in the pathway alkene biosynthesis; ethylene biosynthesis via S-adenosyl-L-methionine; ethylene from S-adenosyl-L-methionine: step 1/2. Its function is as follows. 1-aminocyclopropane-1-carboxylate synthase (ACS) enzymes catalyze the conversion of S-adenosyl-L-methionine (SAM) into 1-aminocyclopropane-1-carboxylate (ACC), a direct precursor of ethylene. The chain is 1-aminocyclopropane-1-carboxylate synthase 9 (ACS9) from Arabidopsis thaliana (Mouse-ear cress).